We begin with the raw amino-acid sequence, 599 residues long: Aspartate--tRNA(Asp/Asn) ligase (599 aa).

Position 174 (Glu-174) interacts with L-aspartate. Positions 198-201 are aspartate; it reads QLFK. Arg-220 contributes to the L-aspartate binding site. Residues 220 to 222 and Gln-229 each bind ATP; that span reads RDE. His-457 contributes to the L-aspartate binding site. Glu-491 is an ATP binding site. Position 498 (Arg-498) interacts with L-aspartate. ATP is bound at residue 543-546; the sequence is GLDR.

Belongs to the class-II aminoacyl-tRNA synthetase family. Type 1 subfamily. As to quaternary structure, homodimer.

The protein localises to the cytoplasm. The enzyme catalyses tRNA(Asx) + L-aspartate + ATP = L-aspartyl-tRNA(Asx) + AMP + diphosphate. Functionally, aspartyl-tRNA synthetase with relaxed tRNA specificity since it is able to aspartylate not only its cognate tRNA(Asp) but also tRNA(Asn). Reaction proceeds in two steps: L-aspartate is first activated by ATP to form Asp-AMP and then transferred to the acceptor end of tRNA(Asp/Asn). The sequence is that of Aspartate--tRNA(Asp/Asn) ligase from Paraburkholderia phytofirmans (strain DSM 17436 / LMG 22146 / PsJN) (Burkholderia phytofirmans).